We begin with the raw amino-acid sequence, 253 residues long: Indole-3-glycerol phosphate synthase (253 aa).

This sequence belongs to the TrpC family.

The enzyme catalyses 1-(2-carboxyphenylamino)-1-deoxy-D-ribulose 5-phosphate + H(+) = (1S,2R)-1-C-(indol-3-yl)glycerol 3-phosphate + CO2 + H2O. It functions in the pathway amino-acid biosynthesis; L-tryptophan biosynthesis; L-tryptophan from chorismate: step 4/5. This Bacillus thuringiensis subsp. konkukian (strain 97-27) protein is Indole-3-glycerol phosphate synthase.